Consider the following 157-residue polypeptide: uncharacterized protein (157 aa).

Positions 9–146 (LLINYKTLDE…GDFYVWHPET (138 aa)) constitute an N-acetyltransferase domain.

This is an uncharacterized protein from Bacillus cereus (strain ZK / E33L).